Consider the following 453-residue polypeptide: UDP-N-acetylmuramoylalanine--D-glutamate ligase (453 aa).

115-121 (GSNGKTT) is a binding site for ATP.

Belongs to the MurCDEF family.

It localises to the cytoplasm. It carries out the reaction UDP-N-acetyl-alpha-D-muramoyl-L-alanine + D-glutamate + ATP = UDP-N-acetyl-alpha-D-muramoyl-L-alanyl-D-glutamate + ADP + phosphate + H(+). It participates in cell wall biogenesis; peptidoglycan biosynthesis. Functionally, cell wall formation. Catalyzes the addition of glutamate to the nucleotide precursor UDP-N-acetylmuramoyl-L-alanine (UMA). The sequence is that of UDP-N-acetylmuramoylalanine--D-glutamate ligase from Koribacter versatilis (strain Ellin345).